We begin with the raw amino-acid sequence, 430 residues long: Cytochrome P450 monooxygenase FGSG_15680 (430 aa).

Cys-351 lines the heme pocket.

It belongs to the cytochrome P450 family. Heme serves as cofactor.

It functions in the pathway mycotoxin biosynthesis. Its function is as follows. Cytochrome P450 monooxygenase; part of the gene cluster that mediates the biosynthesis of gramillins A and B, bicyclic lipopeptides that induce cell death in maize leaves but not in wheat leaves. The nonribosomal peptide synthetase GRA1 incorporates respectively a glutamic adic (Glu), a leucine (Leu), a serine (Ser), a hydroxyglutamine (HOGln), a 2-amino decanoic acid, and 2 cysteins (CysB and CysA). The biosynthesis of 2-amino decanoic acid incorporated in gramillins could be initiated by a fatty acid synthase composed of the alpha and beta subunits FGSG_00036 and FGSG_11656. The cytochrome P450 monooxygenase FGSG_15680 could hydroxylate the fatty acid chain. Subsequent oxidation to the ketone by the oxidoreductase FGSG_00048 and transamination by aminotransferase FGSG_00049 could form 2-amino-decanoic acid. On the other hand, FGSG_15680 could also be responsible for the HO-modified glutamine at the gamma-position. Whether hydroxylation occurs on the fully assembled product or on the Gln residue prior to assembly into the gramillins requires further proof. The thioredoxin FGSG_00043 could also be required for the disulfide-bond formation between CysA and CysB. The specific involvement of the remaining proteins from the cluster is more difficult to discern, but could have broader regulatory (FGSG_00040 and FGSG_11657) or enzymatic functions (FGSG_00044 and FGSG_00045). The final C-domain of GRA1 does not possess the expected sequence of a termination CT domain, often implicated in macrocyclization and release of a cyclopeptidein fungal NRPs; and the thioesterase FGSG_00047 may act in concert with the terminal C-domain of GRA1 to catalyze the formation of the macrocyclic anhydride and release of the products. This is Cytochrome P450 monooxygenase FGSG_15680 from Gibberella zeae (strain ATCC MYA-4620 / CBS 123657 / FGSC 9075 / NRRL 31084 / PH-1) (Wheat head blight fungus).